We begin with the raw amino-acid sequence, 803 residues long: Phenylalanine--tRNA ligase beta subunit (803 aa).

Positions 40–150 constitute a tRNA-binding domain; the sequence is SNKFYGIVIA…IDAPIGCNFY (111 aa). Residues 405–480 form the B5 domain; it reads PKIKIIKLHR…RIYGYNHIPK (76 aa). Asp-458 and Glu-468 together coordinate Mg(2+). Residues 710–803 enclose the FDX-ACB domain; it reads SKFPKNYRDI…LKKHFNAIFR (94 aa).

This sequence belongs to the phenylalanyl-tRNA synthetase beta subunit family. Type 1 subfamily. In terms of assembly, tetramer of two alpha and two beta subunits. It depends on Mg(2+) as a cofactor.

It is found in the cytoplasm. It catalyses the reaction tRNA(Phe) + L-phenylalanine + ATP = L-phenylalanyl-tRNA(Phe) + AMP + diphosphate + H(+). This Blochmanniella floridana protein is Phenylalanine--tRNA ligase beta subunit.